Reading from the N-terminus, the 764-residue chain is 5-methyltetrahydropteroyltriglutamate--homocysteine methyltransferase (764 aa).

5-methyltetrahydropteroyltri-L-glutamate-binding positions include 16–19 (RELK) and K115. Residues 435–437 (IGS) and E488 each bind L-homocysteine. L-methionine is bound by residues 435-437 (IGS) and E488. 5-methyltetrahydropteroyltri-L-glutamate contacts are provided by residues 519–520 (RC) and W565. D603 contacts L-homocysteine. D603 contributes to the L-methionine binding site. E609 is a 5-methyltetrahydropteroyltri-L-glutamate binding site. Residues H645, C647, and E669 each contribute to the Zn(2+) site. The active-site Proton donor is the H698. C730 contributes to the Zn(2+) binding site.

Belongs to the vitamin-B12 independent methionine synthase family. Zn(2+) is required as a cofactor.

It catalyses the reaction 5-methyltetrahydropteroyltri-L-glutamate + L-homocysteine = tetrahydropteroyltri-L-glutamate + L-methionine. Its pathway is amino-acid biosynthesis; L-methionine biosynthesis via de novo pathway; L-methionine from L-homocysteine (MetE route): step 1/1. Functionally, catalyzes the transfer of a methyl group from 5-methyltetrahydrofolate to homocysteine resulting in methionine formation. In Burkholderia mallei (strain NCTC 10247), this protein is 5-methyltetrahydropteroyltriglutamate--homocysteine methyltransferase.